The primary structure comprises 308 residues: D-alanine--D-alanine ligase (308 aa).

In terms of domain architecture, ATP-grasp spans 109–302 (KAAYAAAGLP…FGALCRWIVE (194 aa)). 136-186 (MPPPYVIKPYNEGSSVGVYLVPEGAEAAPELADDLPDTLMVEAFVPGRELT) serves as a coordination point for ATP. Mg(2+) is bound by residues D253, E269, and N271.

The protein belongs to the D-alanine--D-alanine ligase family. It depends on Mg(2+) as a cofactor. The cofactor is Mn(2+).

It is found in the cytoplasm. The catalysed reaction is 2 D-alanine + ATP = D-alanyl-D-alanine + ADP + phosphate + H(+). Its pathway is cell wall biogenesis; peptidoglycan biosynthesis. Its function is as follows. Cell wall formation. This Dinoroseobacter shibae (strain DSM 16493 / NCIMB 14021 / DFL 12) protein is D-alanine--D-alanine ligase.